Consider the following 113-residue polypeptide: DNA-binding protein Mevan_1162 (113 aa).

A compositionally biased stretch (basic and acidic residues) spans Met-1 to Gln-12. Residues Met-1–Glu-22 are disordered.

Belongs to the PDCD5 family.

This chain is DNA-binding protein Mevan_1162, found in Methanococcus vannielii (strain ATCC 35089 / DSM 1224 / JCM 13029 / OCM 148 / SB).